Here is a 191-residue protein sequence, read N- to C-terminus: Small ribosomal subunit protein eS7z (191 aa).

The residue at position 1 (Met-1) is an N-acetylmethionine. Residues 15–50 (ELSELDEQVAQAFFDLENTNQELKSELKDLYVNSAV) are a coiled coil.

The protein belongs to the eukaryotic ribosomal protein eS7 family.

The chain is Small ribosomal subunit protein eS7z (RPS7A) from Arabidopsis thaliana (Mouse-ear cress).